The primary structure comprises 86 residues: Small ribosomal subunit protein bS20 (86 aa).

This sequence belongs to the bacterial ribosomal protein bS20 family.

Binds directly to 16S ribosomal RNA. The polypeptide is Small ribosomal subunit protein bS20 (Rhodococcus jostii (strain RHA1)).